The chain runs to 742 residues: MTDPEISAVETVLDNGKFGTRTVKFETGLLARQAAGAVTAYLDEDTMLLSATTAGKHPKDHFDFFPLTIDVEERMYAAGKIPGSFFRSEGRPGEDAILTCRLIDRPLRPTFKKGLRNEVQVVITVMALNPDTPYDVLAINAASLSTQLSGLPFSGPVGGVRVALIEGQWVAFPTHSQLENAVFDMVVAGRVTETGDVAIMMVEAEATEQTWDLVRSGTQAPTEEIVAGGLDAAKPFIKQLCEAQVELANVAAKPVQDFPVFLDYEDDVYDAVEAAVKAELAAAMKIADKQERNDRTDELKDEVLAKLGEQFEGREKEIGAAFRSVNKQVVRESILRDKVRIDGRGLADIRPLHAEVGVIPRVHGSALFERGETQILGVTTLDMLKMEQQLDTLSPEKHRRYMHKYVFPPFSTGETGRVGSPKRREVGHGALARRALLPVLPTREEFPYAIRQLSEAMGSNGSTSMGSVCASTLALLQAGVPLKAPVAGIAMGLVSGEIDGQLQYVALTDILGAEDAFGDMDFKVAGTREFVTALQLDTKLDGIPAEVLAQALTQARDARLTILDVMAEAIDEPEEMSAYAPRIITITIPVDKIGEVIGPKGKIINQIQDDTGASISIEDDGTIYIGATNGEAAEAAKNAVNAIANPTMPEVGERYLGTVVKTTNFGAFVSLMPGKDGLLHISKLRSLAGGKRVDAVEDVVSVGQKIQVQIAEIDDRGKLSLVPVVEGDQADSDTAEAGSEEE.

Positions 515 and 521 each coordinate Mg(2+). The region spanning 581–640 (PRIITITIPVDKIGEVIGPKGKIINQIQDDTGASISIEDDGTIYIGATNGEAAEAAKNAV) is the KH domain. Positions 652–724 (GERYLGTVVK…DRGKLSLVPV (73 aa)) constitute an S1 motif domain.

It belongs to the polyribonucleotide nucleotidyltransferase family. The cofactor is Mg(2+).

The protein localises to the cytoplasm. The enzyme catalyses RNA(n+1) + phosphate = RNA(n) + a ribonucleoside 5'-diphosphate. In terms of biological role, involved in mRNA degradation. Catalyzes the phosphorolysis of single-stranded polyribonucleotides processively in the 3'- to 5'-direction. This chain is Polyribonucleotide nucleotidyltransferase, found in Nocardioides sp. (strain ATCC BAA-499 / JS614).